Here is a 194-residue protein sequence, read N- to C-terminus: MAEVAQNSPAEVQAKQVVYCGVCTLPPEYCEFGGTAKKCEEWLKDNHADLYQRLYSEEALSSNLSELSVSVRERAAKDAAKKEAKAAAAEARDAERKAAAKVQIKRVERNKRKHVTVITGLEVHGLENKKVAKELGKKFATGSSVTKSPAGVEEITVQGDVSEDVQEWLLELYGKEIPESNIELVEDKKKKASG.

The region spanning V102–Y173 is the SUI1 domain.

Belongs to the DENR family. In terms of assembly, interacts with the 40S ribosomal subunit.

The protein resides in the cytoplasm. The protein is Translation machinery-associated protein 22 (tma22) of Neosartorya fischeri (strain ATCC 1020 / DSM 3700 / CBS 544.65 / FGSC A1164 / JCM 1740 / NRRL 181 / WB 181) (Aspergillus fischerianus).